The sequence spans 164 residues: Phosphopantetheine adenylyltransferase (164 aa).

T9 lines the substrate pocket. ATP-binding positions include 9–10 (TF) and H17. K41, L78, and R92 together coordinate substrate. Residues 93 to 95 (GLR), E103, and 128 to 134 (RQAIASK) contribute to the ATP site.

It belongs to the bacterial CoaD family. In terms of assembly, homohexamer. Mg(2+) serves as cofactor.

Its subcellular location is the cytoplasm. It catalyses the reaction (R)-4'-phosphopantetheine + ATP + H(+) = 3'-dephospho-CoA + diphosphate. It functions in the pathway cofactor biosynthesis; coenzyme A biosynthesis; CoA from (R)-pantothenate: step 4/5. Functionally, reversibly transfers an adenylyl group from ATP to 4'-phosphopantetheine, yielding dephospho-CoA (dPCoA) and pyrophosphate. In Paracoccus denitrificans (strain Pd 1222), this protein is Phosphopantetheine adenylyltransferase.